The primary structure comprises 391 residues: Putative ABC transporter glucose-binding protein TsgA13 (391 aa).

The first 28 residues, 1–28 (MLDEESSIQRRDVLSALGAAGVTTLAGC), serve as a signal peptide directing secretion. Positions 24–71 (TLAGCTGGDTGDTDDTEASETTASEGTTSGTTTGDVETTDGGGPSEGE) are disordered. Residues 42-59 (SETTASEGTTSGTTTGDV) are compositionally biased toward low complexity.

It belongs to the BMP lipoprotein family. As to quaternary structure, the complex is composed of two ATP-binding proteins (TsgD13), two transmembrane proteins (TsgB13 and TsgC13) and a solute-binding protein (TsgA13).

Functionally, part of an ABC transporter complex involved in glucose import. This Haloferax volcanii (strain ATCC 29605 / DSM 3757 / JCM 8879 / NBRC 14742 / NCIMB 2012 / VKM B-1768 / DS2) (Halobacterium volcanii) protein is Putative ABC transporter glucose-binding protein TsgA13 (tsgA13).